The sequence spans 264 residues: Apolipoprotein A-I (264 aa).

Positions 1–18 are cleaved as a signal peptide; the sequence is MRGVLVTLAVLFLTGTQA. Tandem repeats lie at residues 67–88 and 89–110. Positions 67-264 are 10 X approximate tandem repeats; the sequence is LKLADNLDTL…FLDELQKSVA (198 aa). A 3; half-length repeat occupies 111–121; the sequence is KDLEEVKEKIR. Repeat copies occupy residues 122 to 143, 144 to 165, 166 to 187, 188 to 209, and 210 to 231. One copy of the 9; half-length repeat lies at 232-242; it reads PLVQEFRERLT. Residues 243 to 264 form repeat 10; sequence PYAENLKNRLISFLDELQKSVA.

Belongs to the apolipoprotein A1/A4/E family. As to quaternary structure, homodimer. Major protein of plasma HDL, also found in chylomicrons.

The protein localises to the secreted. Its function is as follows. Participates in the reverse transport of cholesterol from tissues to the liver for excretion by promoting cholesterol efflux from tissues and by acting as a cofactor for the lecithin cholesterol acyltransferase (LCAT). This is Apolipoprotein A-I (APOA1) from Gallus gallus (Chicken).